A 203-amino-acid polypeptide reads, in one-letter code: Recombination protein RecR (203 aa).

The C4-type zinc finger occupies 57–72; the sequence is CARCNTFSETELCVLC. Residues 80-175 form the Toprim domain; it reads DVLCVVEMPA…SVSRIARGLP (96 aa).

Belongs to the RecR family.

May play a role in DNA repair. It seems to be involved in an RecBC-independent recombinational process of DNA repair. It may act with RecF and RecO. This is Recombination protein RecR from Laribacter hongkongensis (strain HLHK9).